Here is a 376-residue protein sequence, read N- to C-terminus: Biotin synthase (376 aa).

The region spanning 68 to 292 (NEVQISTLLS…IAVTRICCPS (225 aa)) is the Radical SAM core domain. [4Fe-4S] cluster-binding residues include C83, C87, and C90. Residues C129, C160, C220, and R296 each coordinate [2Fe-2S] cluster.

Belongs to the radical SAM superfamily. Biotin synthase family. As to quaternary structure, homodimer. Requires [4Fe-4S] cluster as cofactor. [2Fe-2S] cluster is required as a cofactor.

It catalyses the reaction (4R,5S)-dethiobiotin + (sulfur carrier)-SH + 2 reduced [2Fe-2S]-[ferredoxin] + 2 S-adenosyl-L-methionine = (sulfur carrier)-H + biotin + 2 5'-deoxyadenosine + 2 L-methionine + 2 oxidized [2Fe-2S]-[ferredoxin]. The protein operates within cofactor biosynthesis; biotin biosynthesis; biotin from 7,8-diaminononanoate: step 2/2. Its function is as follows. Catalyzes the conversion of dethiobiotin (DTB) to biotin by the insertion of a sulfur atom into dethiobiotin via a radical-based mechanism. The chain is Biotin synthase from Psychrobacter cryohalolentis (strain ATCC BAA-1226 / DSM 17306 / VKM B-2378 / K5).